A 152-amino-acid chain; its full sequence is 1,4-dihydroxy-2-naphthoyl-CoA hydrolase (152 aa).

The active site involves Asp20.

The protein belongs to the 4-hydroxybenzoyl-CoA thioesterase family. DHNA-CoA hydrolase subfamily.

It catalyses the reaction 1,4-dihydroxy-2-naphthoyl-CoA + H2O = 1,4-dihydroxy-2-naphthoate + CoA + H(+). It participates in cofactor biosynthesis; phylloquinone biosynthesis. The protein operates within quinol/quinone metabolism; 1,4-dihydroxy-2-naphthoate biosynthesis; 1,4-dihydroxy-2-naphthoate from chorismate: step 7/7. Its function is as follows. Catalyzes the hydrolysis of 1,4-dihydroxy-2-naphthoyl-CoA (DHNA-CoA) to 1,4-dihydroxy-2-naphthoate (DHNA), a reaction involved in phylloquinone (vitamin K1) biosynthesis. This chain is 1,4-dihydroxy-2-naphthoyl-CoA hydrolase, found in Parasynechococcus marenigrum (strain WH8102).